Here is a 310-residue protein sequence, read N- to C-terminus: Tyrosine recombinase XerC (310 aa).

The 92-residue stretch at 1-92 (MDELIKEFDR…SLRAFFKYLH (92 aa)) folds into the Core-binding (CB) domain. The Tyr recombinase domain maps to 113-300 (YIPAVLSVDE…SVNRLMAVYD (188 aa)). Residues Arg153, Lys177, His252, Arg255, and His278 contribute to the active site. The O-(3'-phospho-DNA)-tyrosine intermediate role is filled by Tyr287.

Belongs to the 'phage' integrase family. XerC subfamily. In terms of assembly, forms a cyclic heterotetrameric complex composed of two molecules of XerC and two molecules of XerD.

It localises to the cytoplasm. Functionally, site-specific tyrosine recombinase, which acts by catalyzing the cutting and rejoining of the recombining DNA molecules. The XerC-XerD complex is essential to convert dimers of the bacterial chromosome into monomers to permit their segregation at cell division. It also contributes to the segregational stability of plasmids. The polypeptide is Tyrosine recombinase XerC (Syntrophus aciditrophicus (strain SB)).